We begin with the raw amino-acid sequence, 139 residues long: Interleukin-5 (139 aa).

Positions 1–19 are cleaved as a signal peptide; it reads MMKILVCLPLLTLYAGCVY. N-linked (GlcNAc...) asparagine glycans are attached at residues Asn-48, Asn-77, and Asn-91.

Belongs to the IL-5 family. Homodimer; disulfide-linked. Interacts with IL5RA. Interacts with CSF2RB.

It is found in the secreted. Homodimeric cytokine expressed predominantly by T-lymphocytes and NK cells that plays an important role in the survival, differentiation, and chemotaxis of eosinophils. Also acts on activated and resting B-cells to induce immunoglobulin production, growth, and differentiation. Mechanistically, exerts its biological effects through a receptor composed of IL5RA subunit and the cytokine receptor common subunit beta/CSF2RB. Binding to the receptor leads to activation of various kinases including LYN, SYK and JAK2 and thereby propagates signals through the RAS-MAPK and JAK-STAT5 pathways respectively. This is Interleukin-5 (IL5) from Notamacropus eugenii (Tammar wallaby).